The chain runs to 261 residues: Indole-3-glycerol phosphate synthase (261 aa).

Belongs to the TrpC family.

It carries out the reaction 1-(2-carboxyphenylamino)-1-deoxy-D-ribulose 5-phosphate + H(+) = (1S,2R)-1-C-(indol-3-yl)glycerol 3-phosphate + CO2 + H2O. It participates in amino-acid biosynthesis; L-tryptophan biosynthesis; L-tryptophan from chorismate: step 4/5. In Paraburkholderia xenovorans (strain LB400), this protein is Indole-3-glycerol phosphate synthase.